The sequence spans 266 residues: Energy-coupling factor transporter ATP-binding protein EcfA2 (266 aa).

The 236-residue stretch at 3 to 238 folds into the ABC transporter domain; sequence IEVVNVSHIF…YDPRFFTSKM (236 aa). 43–48 contributes to the ATP binding site; it reads GSGKST. Catalysis depends on glutamate 164, which acts as the Proton acceptor. The tract at residues 220-266 is required for heterodimer formation; the sequence is GTRMEFLEKYDPRFFTSKMLVMRRLVLKGEDPFSMSDDELLERVCNS.

It belongs to the ABC transporter superfamily. Energy-coupling factor EcfA family. As to quaternary structure, forms a heterodimer with EcfA1. Forms a stable energy-coupling factor (ECF) transporter complex composed of 2 membrane-embedded substrate-binding proteins (S component, RibU, BioY), 2 ATP-binding proteins (A component) and 2 transmembrane proteins (T component) upon coexpression in E.coli. Stable subcomplexes with both A plus T components can also be isolated. This complex interacts with at least 2 substrate-specific components, BioY and RibU.

Its subcellular location is the cell inner membrane. In terms of biological role, ATP-binding (A) component of a common energy-coupling factor (ECF) ABC-transporter complex. Unlike classic ABC transporters this ECF transporter provides the energy necessary to transport a number of different substrates. Expression of the complex plus RibU in E.coli allows riboflavin uptake; uptake does not occur in the absence of RibU or the EcfA1A2T complex. This is Energy-coupling factor transporter ATP-binding protein EcfA2 (ecfA2) from Thermotoga maritima (strain ATCC 43589 / DSM 3109 / JCM 10099 / NBRC 100826 / MSB8).